A 94-amino-acid polypeptide reads, in one-letter code: Co-chaperonin GroES (94 aa).

It belongs to the GroES chaperonin family. Heptamer of 7 subunits arranged in a ring. Interacts with the chaperonin GroEL.

It is found in the cytoplasm. In terms of biological role, together with the chaperonin GroEL, plays an essential role in assisting protein folding. The GroEL-GroES system forms a nano-cage that allows encapsulation of the non-native substrate proteins and provides a physical environment optimized to promote and accelerate protein folding. GroES binds to the apical surface of the GroEL ring, thereby capping the opening of the GroEL channel. This is Co-chaperonin GroES from Clostridium perfringens (strain SM101 / Type A).